The following is a 256-amino-acid chain: tRNA pseudouridine synthase A (256 aa).

D43 (nucleophile) is an active-site residue. Residue Y94 coordinates substrate.

Belongs to the tRNA pseudouridine synthase TruA family.

It carries out the reaction uridine(38/39/40) in tRNA = pseudouridine(38/39/40) in tRNA. Formation of pseudouridine at positions 38, 39 and 40 in the anticodon stem and loop of transfer RNAs. The protein is tRNA pseudouridine synthase A of Pyrobaculum aerophilum (strain ATCC 51768 / DSM 7523 / JCM 9630 / CIP 104966 / NBRC 100827 / IM2).